We begin with the raw amino-acid sequence, 161 residues long: S-ribosylhomocysteine lyase (161 aa).

Fe cation-binding residues include H57, H61, and C127.

This sequence belongs to the LuxS family. Homodimer. The cofactor is Fe cation.

The enzyme catalyses S-(5-deoxy-D-ribos-5-yl)-L-homocysteine = (S)-4,5-dihydroxypentane-2,3-dione + L-homocysteine. Involved in the synthesis of autoinducer 2 (AI-2) which is secreted by bacteria and is used to communicate both the cell density and the metabolic potential of the environment. The regulation of gene expression in response to changes in cell density is called quorum sensing. Catalyzes the transformation of S-ribosylhomocysteine (RHC) to homocysteine (HC) and 4,5-dihydroxy-2,3-pentadione (DPD). The chain is S-ribosylhomocysteine lyase from Streptococcus equi subsp. zooepidemicus (strain H70).